Consider the following 293-residue polypeptide: Formamidopyrimidine-DNA glycosylase (293 aa).

The active-site Schiff-base intermediate with DNA is proline 2. Glutamate 3 functions as the Proton donor in the catalytic mechanism. Lysine 58 (proton donor; for beta-elimination activity) is an active-site residue. DNA is bound by residues histidine 104, arginine 127, and arginine 170. The FPG-type zinc finger occupies 257–293 (SVYGREGKPCRNPACGGTVERVVQSGRSTFFCASCQT). Arginine 283 serves as the catalytic Proton donor; for delta-elimination activity.

This sequence belongs to the FPG family. Monomer. It depends on Zn(2+) as a cofactor.

The catalysed reaction is Hydrolysis of DNA containing ring-opened 7-methylguanine residues, releasing 2,6-diamino-4-hydroxy-5-(N-methyl)formamidopyrimidine.. It catalyses the reaction 2'-deoxyribonucleotide-(2'-deoxyribose 5'-phosphate)-2'-deoxyribonucleotide-DNA = a 3'-end 2'-deoxyribonucleotide-(2,3-dehydro-2,3-deoxyribose 5'-phosphate)-DNA + a 5'-end 5'-phospho-2'-deoxyribonucleoside-DNA + H(+). Its function is as follows. Involved in base excision repair of DNA damaged by oxidation or by mutagenic agents. Acts as a DNA glycosylase that recognizes and removes damaged bases. Has a preference for oxidized purines, such as 7,8-dihydro-8-oxoguanine (8-oxoG). Has AP (apurinic/apyrimidinic) lyase activity and introduces nicks in the DNA strand. Cleaves the DNA backbone by beta-delta elimination to generate a single-strand break at the site of the removed base with both 3'- and 5'-phosphates. This Brucella canis (strain ATCC 23365 / NCTC 10854 / RM-666) protein is Formamidopyrimidine-DNA glycosylase.